The following is a 535-amino-acid chain: Calcium-dependent protein kinase 5 (535 aa).

Positions 1–46 (MGNACRGSFGGKTFQGYPQPQDHSESNSNPKHNSDSPKPKKEQQPL) are disordered. Residue G2 is the site of N-myristoyl glycine attachment. C5 carries the S-palmitoyl cysteine lipid modification. Over residues 32-43 (HNSDSPKPKKEQ) the composition is skewed to basic and acidic residues. The Protein kinase domain occupies 72–330 (YTLGRKLGQG…AHEVLCHPWI (259 aa)). ATP-binding positions include 78 to 86 (LGQGQFGTT) and K101. The active-site Proton acceptor is D196. Positions 336–366 (APDRALDPAVLSRLKHFSAMNKLKKMALRVI) are autoinhibitory domain. 4 consecutive EF-hand domains span residues 373 to 408 (EEIA…YGST), 409 to 444 (LKDI…LNKL), 445 to 480 (DREE…HNIT), and 484 to 514 (FEDI…GNPC). 19 residues coordinate Ca(2+): D386, D388, S390, E397, D422, D424, S426, T428, E433, D458, D460, S462, Y464, E469, D492, D494, D496, R498, and E503.

The protein belongs to the protein kinase superfamily. Ser/Thr protein kinase family. CDPK subfamily.

It is found in the cell membrane. The catalysed reaction is L-seryl-[protein] + ATP = O-phospho-L-seryl-[protein] + ADP + H(+). The enzyme catalyses L-threonyl-[protein] + ATP = O-phospho-L-threonyl-[protein] + ADP + H(+). Activated by calcium. Autophosphorylation may play an important role in the regulation of the kinase activity. Functionally, regulates the production of reactive oxygen species (ROS) by NADPH oxidase. This Solanum tuberosum (Potato) protein is Calcium-dependent protein kinase 5 (CPK5).